A 112-amino-acid chain; its full sequence is Nucleoid-associated protein CA_C0126 (112 aa).

A compositionally biased stretch (basic and acidic residues) spans 93-102 (EEETSGEMKK). The segment at 93–112 (EEETSGEMKKLTGGLNIPGL) is disordered.

The protein belongs to the YbaB/EbfC family. As to quaternary structure, homodimer.

The protein resides in the cytoplasm. It localises to the nucleoid. In terms of biological role, binds to DNA and alters its conformation. May be involved in regulation of gene expression, nucleoid organization and DNA protection. The chain is Nucleoid-associated protein CA_C0126 from Clostridium acetobutylicum (strain ATCC 824 / DSM 792 / JCM 1419 / IAM 19013 / LMG 5710 / NBRC 13948 / NRRL B-527 / VKM B-1787 / 2291 / W).